Here is a 428-residue protein sequence, read N- to C-terminus: Glutamate-1-semialdehyde 2,1-aminomutase (428 aa).

Lysine 267 is subject to N6-(pyridoxal phosphate)lysine.

The protein belongs to the class-III pyridoxal-phosphate-dependent aminotransferase family. HemL subfamily. Homodimer. The cofactor is pyridoxal 5'-phosphate.

It localises to the cytoplasm. The enzyme catalyses (S)-4-amino-5-oxopentanoate = 5-aminolevulinate. Its pathway is porphyrin-containing compound metabolism; protoporphyrin-IX biosynthesis; 5-aminolevulinate from L-glutamyl-tRNA(Glu): step 2/2. This chain is Glutamate-1-semialdehyde 2,1-aminomutase, found in Pelobacter propionicus (strain DSM 2379 / NBRC 103807 / OttBd1).